A 150-amino-acid chain; its full sequence is UPF0756 membrane protein NT05HA_0561 (150 aa).

Helical transmembrane passes span 1-21, 52-72, 81-101, and 128-148; these read MSLQ…LGIF, YGLS…LVSG, AFVS…AWLA, and FLGG…VLIG.

Belongs to the UPF0756 family.

Its subcellular location is the cell membrane. This chain is UPF0756 membrane protein NT05HA_0561, found in Aggregatibacter aphrophilus (strain NJ8700) (Haemophilus aphrophilus).